A 92-amino-acid chain; its full sequence is Progonadoliberin-1 (92 aa).

A signal peptide spans 1–23 (METIPKLMAAVVLLTVCLEGCSS). At Gln-24 the chain carries Pyrrolidone carboxylic acid. Gly-33 is modified (glycine amide).

The protein belongs to the GnRH family. In terms of processing, the precursor is cleaved by ACE, which removes the Gly-Lys-Arg peptide at the C-terminus, leading to mature hormone. The mature form of Gonadoliberin-1 is also cleaved and degraded by ACE. As to expression, central nervous system.

The protein resides in the secreted. Functionally, stimulates the secretion of gonadotropins; it stimulates the secretion of both luteinizing and follicle-stimulating hormones. This chain is Progonadoliberin-1 (Gnrh1), found in Rattus norvegicus (Rat).